The primary structure comprises 492 residues: E3 ubiquitin-protein ligase ARIH2 (492 aa).

A compositionally biased stretch (polar residues) spans 1 to 11; sequence MSVDMNSQGSD. Residues 1 to 37 form a disordered region; it reads MSVDMNSQGSDSNEEDYDPNCEEEEEEEEDPGDIEDY. Residues 12–36 are compositionally biased toward acidic residues; sequence SNEEDYDPNCEEEEEEEEDPGDIED. Residues 64 to 111 form a UBA-like region; it reads TYKESEGALHEHMTSLASVLKVSHSVAKLILVNFHWQVSEILDRYRSN. The segment at 134–343 is TRIAD supradomain; it reads PPHHCAVCMQ…SEYYECSRYK (210 aa). Positions 138, 141, 155, 157, 160, 163, 182, 187, 227, 232, 248, 251, 256, 259, 264, 269, 296, and 299 each coordinate Zn(2+). The RING-type 1 zinc finger occupies 138–187; sequence CAVCMQFVRKENLLSLACQHQFCRSCWEQHCSVLVKDGVGVGISCMAQDC. Residues 207–269 form an IBR-type zinc finger; it reads DKYRRYLFRD…RQMYHAPTDC (63 aa). The RING-type 2; atypical zinc-finger motif lies at 296 to 325; that stretch reads CPKCNICIEKNGGCNHMQCSKCKHDFCWMC. Residue C309 is part of the active site. Positions 314, 317, 322, 325, 332, and 339 each coordinate Zn(2+). Residue S352 is modified to Phosphoserine. An ariadne domain region spans residues 358 to 492; it reads REALKKYLFY…RTLLKDFHDT (135 aa).

Belongs to the RBR family. Ariadne subfamily. As to quaternary structure, interacts (via RING-type zinc finger 1) with UBE2L3. Interacts (via RING-type zinc finger 2) with UBE2N. Interacts with neddylated CUL5. Interacts (via RING-type 2) with GFI1B. Interacts with GFI1; prevents its ubiquitination and proteasomal degradation. Interacts with DCUN1D1 (via UBA-like domain); promotes DCUN1D1 ubiquitination. Ubiquitinated. Ubiquitination promotes proteasomal degradation.

It localises to the nucleus. It is found in the cytoplasm. It catalyses the reaction [E2 ubiquitin-conjugating enzyme]-S-ubiquitinyl-L-cysteine + [acceptor protein]-L-lysine = [E2 ubiquitin-conjugating enzyme]-L-cysteine + [acceptor protein]-N(6)-ubiquitinyl-L-lysine.. It functions in the pathway protein modification; protein ubiquitination. With respect to regulation, autoinhibited by the ariadne domain, which masks the second RING-type zinc finger that contains the active site and inhibits the E3 activity. Inhibition is relieved upon binding to neddylated cullin-RING ubiquitin ligase complexes, which activate the E3 ligase activity of ARIH1. Its function is as follows. E3 ubiquitin-protein ligase, which catalyzes ubiquitination of target proteins together with ubiquitin-conjugating enzyme E2 UBE2L3. Acts as an atypical E3 ubiquitin-protein ligase by working together with cullin-5-RING ubiquitin ligase complex (ECS complex, also named CRL5 complex) and initiating ubiquitination of ECS substrates: associates with ECS complex and specifically mediates addition of the first ubiquitin on ECS targets. The initial ubiquitin is then elongated. E3 ubiquitin-protein ligase activity is activated upon binding to neddylated form of the ECS complex. Mediates 'Lys-6', 'Lys-48'- and 'Lys-63'-linked polyubiquitination. May play a role in myelopoiesis. The chain is E3 ubiquitin-protein ligase ARIH2 (Arih2) from Mus musculus (Mouse).